The chain runs to 220 residues: uncharacterized protein (220 aa).

A coiled-coil region spans residues 165–202 (DKYEDLISDYNKIMEKYREVIKSEIEKYKALSKRKNDI).

This is an uncharacterized protein from Pasteurella multocida (strain Pm70).